The chain runs to 231 residues: uncharacterized protein (231 aa).

This is an uncharacterized protein from Haemophilus influenzae (strain ATCC 51907 / DSM 11121 / KW20 / Rd).